The primary structure comprises 496 residues: Nucleolar and spindle-associated protein 1-B (496 aa).

3 disordered regions span residues 44-206, 250-294, and 338-496; these read YPES…HEAH, TPVS…STAN, and KSSS…VPVK. Polar residues predominate over residues 56–69; sequence GCTSLTDTDELNSS. Positions 121-134 are enriched in basic and acidic residues; that stretch reads TQDKDCLESKKKEV. Residues 150 to 159 show a composition bias toward polar residues; that stretch reads QDTSKQNNSE. The segment covering 261–281 has biased composition (low complexity); that stretch reads SRLSLLSPLPRTTGASPSRTP. Polar residues-rich tracts occupy residues 376 to 396 and 403 to 423; these read NTTI…NKAN and AQNT…QASL. Low complexity predominate over residues 447–459; it reads SGSNSNVSVLKNN. A compositionally biased stretch (basic and acidic residues) spans 467–485; sequence TREERRKQHELDRKGKRDQ.

It belongs to the NUSAP family. As to quaternary structure, interacts with DNA, microtubules, ipo7, kpna2 and kpnb1. Microtubule stabilization is inhibited by ipo7 and kpna2, while microtubule bundling is inhibited by kpnb1. Active GTP-bound ran causes dissociation of ipo7 and kpnb1.

Its subcellular location is the cytoplasm. The protein localises to the nucleus. It is found in the cytoskeleton. It localises to the spindle. In terms of biological role, microtubule-associated protein with the capacity to bundle and stabilize microtubules. May associate with chromosomes and promote the organization of meiotic or mitotic spindle microtubules around them. The protein is Nucleolar and spindle-associated protein 1-B (nusap1-b) of Xenopus laevis (African clawed frog).